The chain runs to 1323 residues: RNA replication protein (1323 aa).

The 165-residue stretch at 60–224 (NPHSIRLHTH…SHEFEDLDWL (165 aa)) folds into the Alphavirus-like MT domain. Positions 432-486 (EPHPLDSLPDADDRDVNYDTDVSEDEADEKPAPKAPTSTPVPDTTPPASPAAPAD) are disordered. The (+)RNA virus helicase ATP-binding domain maps to 572-733 (IGMILKKQPN…FWTQYCRFYV (162 aa)). 605 to 612 (GAGGSGKS) contributes to the ATP binding site. A (+)RNA virus helicase C-terminal domain is found at 734–867 (NATHRNVKRL…LSREIEIPEA (134 aa)). The 108-residue stretch at 1104–1211 (GLAHSNDFTA…DRTPVPRPSF (108 aa)) folds into the RdRp catalytic domain.

This sequence belongs to the potexvirus/carlavirus RNA replication protein family.

It carries out the reaction RNA(n) + a ribonucleoside 5'-triphosphate = RNA(n+1) + diphosphate. It catalyses the reaction ATP + H2O = ADP + phosphate + H(+). In terms of biological role, RNA replication. The central part of this protein possibly functions as an ATP-binding helicase. In Strawberry mild yellow edge-associated virus (SMYEaV), this protein is RNA replication protein.